A 459-amino-acid chain; its full sequence is ATP synthase subunit beta (459 aa).

148–155 (GGAGVGKT) contributes to the ATP binding site.

The protein belongs to the ATPase alpha/beta chains family. As to quaternary structure, F-type ATPases have 2 components, CF(1) - the catalytic core - and CF(0) - the membrane proton channel. CF(1) has five subunits: alpha(3), beta(3), gamma(1), delta(1), epsilon(1). CF(0) has three main subunits: a(1), b(2) and c(9-12). The alpha and beta chains form an alternating ring which encloses part of the gamma chain. CF(1) is attached to CF(0) by a central stalk formed by the gamma and epsilon chains, while a peripheral stalk is formed by the delta and b chains.

It is found in the cell inner membrane. The catalysed reaction is ATP + H2O + 4 H(+)(in) = ADP + phosphate + 5 H(+)(out). Its function is as follows. Produces ATP from ADP in the presence of a proton gradient across the membrane. The catalytic sites are hosted primarily by the beta subunits. This chain is ATP synthase subunit beta, found in Burkholderia mallei (strain NCTC 10229).